The following is a 468-amino-acid chain: Ribosomal protein uS12 methylthiotransferase RimO (468 aa).

One can recognise an MTTase N-terminal domain in the interval 16–130; the sequence is NKIHFISLGC…ILSAIESRES (115 aa). [4Fe-4S] cluster-binding residues include cysteine 25, cysteine 61, cysteine 93, cysteine 164, cysteine 168, and cysteine 171. One can recognise a Radical SAM core domain in the interval 150 to 382; the sequence is STPKHYAYLK…SQIQKRNVDK (233 aa). A TRAM domain is found at 385–455; that stretch reads QKLIGEKIEA…GYDLVGRVVK (71 aa).

This sequence belongs to the methylthiotransferase family. RimO subfamily. [4Fe-4S] cluster serves as cofactor.

It localises to the cytoplasm. The enzyme catalyses L-aspartate(89)-[ribosomal protein uS12]-hydrogen + (sulfur carrier)-SH + AH2 + 2 S-adenosyl-L-methionine = 3-methylsulfanyl-L-aspartate(89)-[ribosomal protein uS12]-hydrogen + (sulfur carrier)-H + 5'-deoxyadenosine + L-methionine + A + S-adenosyl-L-homocysteine + 2 H(+). Functionally, catalyzes the methylthiolation of an aspartic acid residue of ribosomal protein uS12. The protein is Ribosomal protein uS12 methylthiotransferase RimO of Chlamydia pneumoniae (Chlamydophila pneumoniae).